The chain runs to 829 residues: Cadherin-16 (829 aa).

An N-terminal signal peptide occupies residues 1-18; the sequence is MVPAWLWLLCFSVPQALV. Topologically, residues 19-786 are extracellular; sequence EVSPTTLHVE…MKGMPTKLSA (768 aa). Cadherin domains are found at residues 25–126, 131–235, 242–336, 341–449, 455–564, and 569–665; these read LHVE…VPQF, YSAR…SIVE, EPVH…APVC, PPVS…APEF, GPVS…PPRL, and YEAD…APAL. 3 N-linked (GlcNAc...) asparagine glycosylation sites follow: Asn-517, Asn-602, and Asn-722. The segment at 666 to 786 is ectodomain G; that stretch reads PLAPMPSRHL…MKGMPTKLSA (121 aa). Residues 787 to 807 form a helical membrane-spanning segment; it reads VGILVGTLAAIGFFLILIFTH. The Cytoplasmic portion of the chain corresponds to 808–829; sequence LALARKKDLDAPADNVPLKAAA.

In terms of tissue distribution, kidney specific. Limited to the basolateral membranes of renal tubular epithelial cells.

It localises to the cell membrane. In terms of biological role, cadherins are calcium-dependent cell adhesion proteins. They preferentially interact with themselves in a homophilic manner in connecting cells; cadherins may thus contribute to the sorting of heterogeneous cell types. The protein is Cadherin-16 (CDH16) of Oryctolagus cuniculus (Rabbit).